We begin with the raw amino-acid sequence, 1021 residues long: Ephrin type-B receptor 6 (1021 aa).

The signal sequence occupies residues 1 to 31; that stretch reads MATEGAAQLGNRVAGMVCSLWVLLLVSSVLA. Residues 32–594 are Extracellular-facing; the sequence is LEEVLLDTTG…LSSQLPERLS (563 aa). In terms of domain architecture, Eph LBD spans 33-237; that stretch reads EEVLLDTTGE…FSYTCPAVLR (205 aa). Residues 163 to 182 form a disordered region; sequence SFPSSSSSSSSSSSAAWAVG. Positions 166 to 176 are enriched in low complexity; that stretch reads SSSSSSSSSSS. Fibronectin type-III domains follow at residues 369–486 and 487–582; these read PPSA…TSHE and VPSA…TLPQ. The N-linked (GlcNAc...) asparagine glycan is linked to N480. The helical transmembrane segment at 595-615 threads the bilayer; it reads LVIGSILGALAFLLLAAITVL. The Cytoplasmic segment spans residues 616–1021; the sequence is AVVFQRKRRG…HLRQQGSVEV (406 aa). The Protein kinase domain maps to 670 to 919; the sequence is IKIEEVIGTG…QLVAAFDKMI (250 aa). ATP is bound at residue 676 to 684; it reads IGTGSFGEV. Residues 948–1012 enclose the SAM domain; sequence PCLDSPQAWL…LHHIQLLQQH (65 aa). The PDZ-binding motif lies at 1019–1021; that stretch reads VEV.

This sequence belongs to the protein kinase superfamily. Tyr protein kinase family. Ephrin receptor subfamily. As to quaternary structure, interacts with CBL and EPHB1. Interacts with FYN; this interaction takes place in a ligand-independent manner. Post-translationally, ligand-binding increases phosphorylation on tyrosine residues. Phosphorylation on tyrosine residues is mediated by transphosphorylation by the catalytically active EPHB1 in a ligand-independent manner. Tyrosine phosphorylation of the receptor may act as a switch on the functional transition from cell adhesion/attraction to de-adhesion/repulsion. As to expression, expressed in brain. Expressed in non invasive breast carcinoma cell lines (at protein level). Strong expression in brain and pancreas, and weak expression in other tissues, such as heart, placenta, lung, liver, skeletal muscle and kidney. Expressed in breast non invasive tumors but not in metastatic lesions. Isoform 3 is expressed in cell lines of glioblastomas, anaplastic astrocytomas, gliosarcomas and astrocytomas. Isoform 3 is not detected in normal tissues.

Its subcellular location is the membrane. It localises to the secreted. Functionally, kinase-defective receptor for members of the ephrin-B family. Binds to ephrin-B1 and ephrin-B2. Modulates cell adhesion and migration by exerting both positive and negative effects upon stimulation with ephrin-B2. Inhibits JNK activation, T-cell receptor-induced IL-2 secretion and CD25 expression upon stimulation with ephrin-B2. The sequence is that of Ephrin type-B receptor 6 (EPHB6) from Homo sapiens (Human).